The sequence spans 475 residues: uncharacterized protein (475 aa).

Residues 185 to 244 (EISVSAISEQLASLMERVDKLEKMNAALEEENKQLKKEREATIKSVKKEAKKIKQEKPQI) adopt a coiled-coil conformation.

This is an uncharacterized protein from Nora virus.